A 273-amino-acid polypeptide reads, in one-letter code: Mitochondrial distribution and morphology protein 12 (273 aa).

Residues 1-260 (MSFDINWEQL…WPSWINFDFY (260 aa)) enclose the SMP-LTD domain. Positions 76-98 (MSAEEETEGSDDEGYGGDRVRNR) are disordered. Over residues 78–90 (AEEETEGSDDEGY) the composition is skewed to acidic residues.

This sequence belongs to the MDM12 family. As to quaternary structure, component of the ER-mitochondria encounter structure (ERMES) or MDM complex, composed of MMM1, MDM10, MDM12 and MDM34. An MMM1 homodimer associates with one molecule of MDM12 on each side in a pairwise head-to-tail manner, and the SMP-LTD domains of MMM1 and MDM12 generate a continuous hydrophobic tunnel for phospholipid trafficking.

It is found in the mitochondrion outer membrane. Its subcellular location is the endoplasmic reticulum membrane. Component of the ERMES/MDM complex, which serves as a molecular tether to connect the endoplasmic reticulum (ER) and mitochondria. Components of this complex are involved in the control of mitochondrial shape and protein biogenesis, and function in nonvesicular lipid trafficking between the ER and mitochondria. MDM12 is required for the interaction of the ER-resident membrane protein MMM1 and the outer mitochondrial membrane-resident beta-barrel protein MDM10. The MDM12-MMM1 subcomplex functions in the major beta-barrel assembly pathway that is responsible for biogenesis of all mitochondrial outer membrane beta-barrel proteins, and acts in a late step after the SAM complex. The MDM10-MDM12-MMM1 subcomplex further acts in the TOM40-specific pathway after the action of the MDM12-MMM1 complex. Essential for establishing and maintaining the structure of mitochondria and maintenance of mtDNA nucleoids. This is Mitochondrial distribution and morphology protein 12 from Vanderwaltozyma polyspora (strain ATCC 22028 / DSM 70294 / BCRC 21397 / CBS 2163 / NBRC 10782 / NRRL Y-8283 / UCD 57-17) (Kluyveromyces polysporus).